The sequence spans 284 residues: NAD kinase (284 aa).

Aspartate 61 serves as the catalytic Proton acceptor. Residues 61 to 62, arginine 66, 136 to 137, arginine 147, lysine 164, aspartate 166, and leucine 201 each bind NAD(+); these read DG and ND.

It belongs to the NAD kinase family. A divalent metal cation is required as a cofactor.

The protein resides in the cytoplasm. The catalysed reaction is NAD(+) + ATP = ADP + NADP(+) + H(+). Its function is as follows. Involved in the regulation of the intracellular balance of NAD and NADP, and is a key enzyme in the biosynthesis of NADP. Catalyzes specifically the phosphorylation on 2'-hydroxyl of the adenosine moiety of NAD to yield NADP. The chain is NAD kinase from Dehalococcoides mccartyi (strain CBDB1).